Reading from the N-terminus, the 106-residue chain is Probable insulin-like peptide beta-type 1 (106 aa).

The first 19 residues, 1-19 (MFSFFTYFLLSALLLSASC), serve as a signal peptide directing secretion. The propeptide at 20-51 (RQPSMDTSKADRILREIEMETELENQLSRARR) is removed; by convertase egl-3. Cystine bridges form between cysteine 60/cysteine 89, cysteine 72/cysteine 102, cysteine 76/cysteine 103, and cysteine 88/cysteine 93.

Belongs to the insulin family. As to expression, expressed by ASI and ASJ sensory neurons and weakly by ventral cord motor neurons.

It localises to the secreted. Its function is as follows. Probable insulin-like peptide which negatively regulates synapse development at the neuromuscular junctions. Probably acts as a daf-2/InsR agonist ligand to prevent dauer formation under optimal environmental conditions. The chain is Probable insulin-like peptide beta-type 1 (ins-4) from Caenorhabditis elegans.